We begin with the raw amino-acid sequence, 305 residues long: Acetyl-coenzyme A carboxylase carboxyl transferase subunit beta (305 aa).

A CoA carboxyltransferase N-terminal domain is found at 29 to 298 (LWTKCESCDA…EMKLPLLESS (270 aa)). Zn(2+) contacts are provided by Cys-33, Cys-36, Cys-52, and Cys-55. The segment at 33–55 (CESCDALTYTKDLQANLMVCLQC) adopts a C4-type zinc-finger fold.

This sequence belongs to the AccD/PCCB family. In terms of assembly, acetyl-CoA carboxylase is a heterohexamer composed of biotin carboxyl carrier protein (AccB), biotin carboxylase (AccC) and two subunits each of ACCase subunit alpha (AccA) and ACCase subunit beta (AccD). It depends on Zn(2+) as a cofactor.

Its subcellular location is the cytoplasm. It catalyses the reaction N(6)-carboxybiotinyl-L-lysyl-[protein] + acetyl-CoA = N(6)-biotinyl-L-lysyl-[protein] + malonyl-CoA. Its pathway is lipid metabolism; malonyl-CoA biosynthesis; malonyl-CoA from acetyl-CoA: step 1/1. Functionally, component of the acetyl coenzyme A carboxylase (ACC) complex. Biotin carboxylase (BC) catalyzes the carboxylation of biotin on its carrier protein (BCCP) and then the CO(2) group is transferred by the transcarboxylase to acetyl-CoA to form malonyl-CoA. This is Acetyl-coenzyme A carboxylase carboxyl transferase subunit beta from Synechococcus sp. (strain ATCC 27144 / PCC 6301 / SAUG 1402/1) (Anacystis nidulans).